The sequence spans 57 residues: UPF0391 membrane protein Patl_0263 (57 aa).

The next 2 helical transmembrane spans lie at 8 to 28 and 30 to 50; these read FFVL…GVAA and IAKV…VLAF.

It belongs to the UPF0391 family.

The protein localises to the cell membrane. In Pseudoalteromonas atlantica (strain T6c / ATCC BAA-1087), this protein is UPF0391 membrane protein Patl_0263.